Reading from the N-terminus, the 361-residue chain is 3-dehydroquinate synthase (361 aa).

This sequence belongs to the archaeal-type DHQ synthase family.

The catalysed reaction is 2-amino-2,3,7-trideoxy-D-lyxo-hept-6-ulosonate + NAD(+) + H2O = 3-dehydroquinate + NH4(+) + NADH + H(+). In terms of biological role, catalyzes the oxidative deamination and cyclization of 2-amino-3,7-dideoxy-D-threo-hept-6-ulosonic acid (ADH) to yield 3-dehydroquinate (DHQ), which is fed into the canonical shikimic pathway of aromatic amino acid biosynthesis. In Methanocaldococcus jannaschii (strain ATCC 43067 / DSM 2661 / JAL-1 / JCM 10045 / NBRC 100440) (Methanococcus jannaschii), this protein is 3-dehydroquinate synthase (aroB').